The primary structure comprises 155 residues: Small ribosomal subunit protein uS7c (155 aa).

Belongs to the universal ribosomal protein uS7 family. As to quaternary structure, part of the 30S ribosomal subunit.

The protein localises to the plastid. It localises to the chloroplast. Its function is as follows. One of the primary rRNA binding proteins, it binds directly to 16S rRNA where it nucleates assembly of the head domain of the 30S subunit. The protein is Small ribosomal subunit protein uS7c (rps7) of Houttuynia cordata (Chameleon plant).